We begin with the raw amino-acid sequence, 359 residues long: C-X-C chemokine receptor type 2 (359 aa).

Over 1-47 the chain is Extracellular; the sequence is MGEFKVDKFNIEDFFSGDLDIFNYSSGMPSILPDAVPCHSENLEINS. A glycan (N-linked (GlcNAc...) asparagine) is linked at N23. Residues 48–74 form a helical membrane-spanning segment; that stretch reads YAVVVIYVLVTLLSLVGNSLVMLVILY. Over 75–83 the chain is Cytoplasmic; sequence NRSTCSVTD. The chain crosses the membrane as a helical span at residues 84 to 104; the sequence is VYLLNLAIADLFFALTLPVWA. Residues 105 to 119 lie on the Extracellular side of the membrane; the sequence is ASKVNGWTFGSTLCK. C118 and C195 are disulfide-bonded. The chain crosses the membrane as a helical span at residues 120-141; sequence IFSYVKEVTFYSSVLLLACISM. At 142–162 the chain is on the cytoplasmic side; that stretch reads DRYLAIVHATSTLIQKRHLVK. A helical transmembrane segment spans residues 163 to 182; sequence FVCIAMWLLSVILALPILIL. At 183–207 the chain is on the extracellular side; sequence RNPVKVNLSTLVCYEDVGNNTSRLR. Residues 208-230 traverse the membrane as a helical segment; the sequence is VVLRILPQTFGFLVPLLIMLFCY. The Cytoplasmic portion of the chain corresponds to 231 to 250; sequence GFTLRTLFKAHMGQKHRAMR. A helical transmembrane segment spans residues 251 to 272; that stretch reads VIFAVVLVFLLCWLPYNLVLFT. Residues 273-293 lie on the Extracellular side of the membrane; it reads DTLMRTKLIKETCERRDDIDK. Residues 294–314 form a helical membrane-spanning segment; sequence ALNATEILGFLHSCLNPIIYA. At 315–359 the chain is on the cytoplasmic side; that stretch reads FIGQKFRHGLLKIMATYGLVSKEFLAKEGRPSFVSSSSANTSTTL.

This sequence belongs to the G-protein coupled receptor 1 family. Interacts with IL8. Interacts with GNAI2. Post-translationally, phosphorylated upon ligand binding; which is required for desensitization.

The protein localises to the cell membrane. In terms of biological role, receptor for interleukin-8 which is a powerful neutrophil chemotactic factor. Binding of IL-8 to the receptor causes activation of neutrophils. This response is mediated via a G-protein that activates a phosphatidylinositol-calcium second messenger system. Binds to IL-8 with high affinity. Also binds with high affinity to CXCL3, GRO/MGSA and NAP-2. The sequence is that of C-X-C chemokine receptor type 2 (Cxcr2) from Mus musculus (Mouse).